The chain runs to 324 residues: Lactonase drp35 (324 aa).

The Ca(2+) site is built by Glu47, Ser109, Gly111, Asp129, Thr132, Tyr134, Asp137, Asn184, Asp235, and Ser236. The active-site Proton donor is the Asp235.

Belongs to the SMP-30/CGR1 family. It depends on Ca(2+) as a cofactor.

It localises to the cytoplasm. Exhibits lactonase activity. Acts in cells with perturbed membrane integrity and is possibly related to the membrane homeostasis. The sequence is that of Lactonase drp35 (drp35) from Staphylococcus aureus (strain bovine RF122 / ET3-1).